The chain runs to 196 residues: MQLIQIEKAILPTPWGDFLIFGFEEKKNGKNHIALVYGKIKKNIPILARIHSECLTGDAFFSLRCDCGIQLEMAMSRIASEGNGILIYHRQEGRNIGLLNKIKAYSLQDKGLDTVEANQKLGFSADERDFSLCADIFNILNIKKIRLLTNNPFKVDMLIASGIEIVERIPIIVEKNDKNAHYLKTKAEKMGHLLFK.

Residue 49-53 participates in GTP binding; it reads RIHSE. Residues Cys54, Cys65, and Cys67 each contribute to the Zn(2+) site. Residues Gln70, 92 to 94, and Thr114 contribute to the GTP site; that span reads EGR. Catalysis depends on Asp126, which acts as the Proton acceptor. The active-site Nucleophile is Arg128. GTP contacts are provided by Thr149 and Lys154.

This sequence belongs to the GTP cyclohydrolase II family. Homodimer. The cofactor is Zn(2+).

It carries out the reaction GTP + 4 H2O = 2,5-diamino-6-hydroxy-4-(5-phosphoribosylamino)-pyrimidine + formate + 2 phosphate + 3 H(+). It functions in the pathway cofactor biosynthesis; riboflavin biosynthesis; 5-amino-6-(D-ribitylamino)uracil from GTP: step 1/4. Functionally, catalyzes the conversion of GTP to 2,5-diamino-6-ribosylamino-4(3H)-pyrimidinone 5'-phosphate (DARP), formate and pyrophosphate. The polypeptide is GTP cyclohydrolase-2 (Buchnera aphidicola subsp. Schizaphis graminum (strain Sg)).